The primary structure comprises 574 residues: Sodium/hydrogen exchanger 8 (574 aa).

A run of 11 helical transmembrane segments spans residues 53 to 73 (MTIF…HLLI), 77 to 97 (LHFL…GAFI), 116 to 136 (PNMF…YSLH), 149 to 169 (LFSV…IYFL), 184 to 204 (FAFG…IFNA), 254 to 274 (LGYF…TGLI), 304 to 324 (GLAE…GIVM), 347 to 367 (VAFM…FSFP), 373 to 393 (SFVI…IFPL), 410 to 430 (MFIM…SLHL), and 444 to 464 (TTII…MPLI).

This sequence belongs to the monovalent cation:proton antiporter 1 (CPA1) transporter (TC 2.A.36) family.

It localises to the golgi apparatus membrane. Its function is as follows. Involved in pH regulation to eliminate acids generated by active metabolism or to counter adverse environmental conditions. Major proton extruding system driven by the inward sodium ion chemical gradient. Plays an important role in signal transduction. This is Sodium/hydrogen exchanger 8 from Gallus gallus (Chicken).